We begin with the raw amino-acid sequence, 237 residues long: Mitochondrial carrier-like protein L276 (237 aa).

Solcar repeat units follow at residues 1-83, 85-161, and 164-233; these read MAKY…FENK, YPYT…LNEY, and KPVV…LNKK. 5 consecutive transmembrane segments (helical) span residues 11–27, 60–76, 91–108, 140–160, and 166–183; these read AIAT…ICTF, VPAI…KYFL, MING…THPI, SFGK…TLNE, and VVSS…MQPL. The Substrate recognition motif lies at 191–196; that stretch reads IYGLSL. The chain crosses the membrane as a helical span at residues 205 to 226; it reads YYRGLSLNLMRIVPHFVITMTT.

Belongs to the mitochondrial carrier (TC 2.A.29) family.

It localises to the host mitochondrion inner membrane. In terms of biological role, transports dATP and to a lesser extent dTTP, TTP, UTP and ADP, possibly across the mitochondrial inner membrane. The polypeptide is Mitochondrial carrier-like protein L276 (Acanthamoeba polyphaga (Amoeba)).